The following is a 413-amino-acid chain: Floricaula/leafy homolog 1 (413 aa).

Disordered regions lie at residues 154-177 (EGLS…GGTT) and 191-239 (QRRR…RQRE). Residues 201 to 210 (GRERRGRASA) show a composition bias toward basic and acidic residues. A compositionally biased stretch (acidic residues) spans 211 to 225 (EEDEETEEGQEDEWN). DNA-binding regions lie at residues 238 to 242 (REHPF), 307 to 314 (NKPKMRHY), and 378 to 381 (YVPT).

It belongs to the FLO/LFY family. As to expression, expressed in floral meristems and in indeterminate vegetative meristems.

It is found in the nucleus. Functionally, probable transcription factor that act to specify determinacy in the progenitor cells for both flowers and leaves. The sequence is that of Floricaula/leafy homolog 1 (FL1) from Nicotiana tabacum (Common tobacco).